Reading from the N-terminus, the 222-residue chain is MGLFGKTQEKPPKELVNEWSLKIRKEMRVVDRQIRDIQREEEKVKRSVKDAAKKGQKDVCVVLAKEMIRSRKAVSKLYASKAHMNSVLMGMKNQLAVLRVAGSLQKSTEVMKAMQSLVKIPEIRATMRELSKEMMKAGIIEEMLEDTFESMDDQEEMEEAAEMEIDRILFEITAGALGKAPSKVTDALPEPEPSGAMAASDEEEEEEEALEAMQSRLATLRS.

G2 is lipidated: N-myristoyl glycine. The tract at residues G2 to A113 is intramolecular interaction with C-terminus. A coiled-coil region spans residues K22–K54. Important for autoinhibitory function stretches follow at residues V59 to A64 and I168 to L169. Positions E149–S222 form a coiled coil. The interval M151–L220 is intramolecular interaction with N-terminus. The interval M151–S222 is interaction with VPS4A. K179 is covalently cross-linked (Glycyl lysine isopeptide (Lys-Gly) (interchain with G-Cter in ubiquitin)). Residues A180–S222 are disordered. Interaction with STAMBP stretches follow at residues A196–S222, E203–E207, and R221–S222. Phosphoserine is present on S200. A compositionally biased stretch (acidic residues) spans S200–L210. The MIT-interacting motif signature appears at D201 to E211.

It belongs to the SNF7 family. In terms of assembly, probable core component of the endosomal sorting required for transport complex III (ESCRT-III). ESCRT-III components are thought to multimerize to form a flat lattice on the perimeter membrane of the endosome. Several assembly forms of ESCRT-III may exist that interact and act sequentially. Forms a metastable monomer in solution; its core structure (without part of the putative autoinhibitory C-terminal acidic region) oligomerizes into a flat lattice via two different dimerization interfaces. In vitro, heteromerizes with CHMP2A (but not CHMP4) to form helical tubular structures that expose membrane-interacting sites on the outside whereas VPS4B can associate on the inside of the tubule. May interact with IGFBP7; the relevance of such interaction however remains unclear. Interacts with CHMP2A. Interacts with CHMP4A; the interaction requires the release of CHMP4A autoinhibition. Interacts with VPS4A. Interacts with STAMBP; the interaction appears to relieve the autoinhibition of CHMP3. Interacts with VTA1.

The protein resides in the cytoplasm. Its subcellular location is the cytosol. The protein localises to the membrane. It localises to the endosome. It is found in the late endosome membrane. In terms of biological role, probable core component of the endosomal sorting required for transport complex III (ESCRT-III) which is involved in multivesicular bodies (MVBs) formation and sorting of endosomal cargo proteins into MVBs. MVBs contain intraluminal vesicles (ILVs) that are generated by invagination and scission from the limiting membrane of the endosome and mostly are delivered to lysosomes enabling degradation of membrane proteins, such as stimulated growth factor receptors, lysosomal enzymes and lipids. The MVB pathway appears to require the sequential function of ESCRT-O, -I,-II and -III complexes. ESCRT-III proteins mostly dissociate from the invaginating membrane before the ILV is released. The ESCRT machinery also functions in topologically equivalent membrane fission events, such as the terminal stages of cytokinesis and the budding of enveloped viruses (lentiviruses). ESCRT-III proteins are believed to mediate the necessary vesicle extrusion and/or membrane fission activities, possibly in conjunction with the AAA ATPase VPS4. Selectively binds to phosphatidylinositol 3,5-bisphosphate PtdIns(3,5)P2 and PtdIns(3,4)P2 in preference to other phosphoinositides tested. Involved in late stages of cytokinesis. Plays a role in endosomal sorting/trafficking of EGF receptor. The sequence is that of Charged multivesicular body protein 3 (CHMP3) from Macaca fascicularis (Crab-eating macaque).